A 309-amino-acid chain; its full sequence is 11-beta-hydroxysteroid dehydrogenase-like 3 (309 aa).

A helical; Signal-anchor for type II membrane protein membrane pass occupies residues 10 to 30; that stretch reads LLLPPLTIIFLFLFYPFYLLI. Residues 54-80 and Asp-105 contribute to the NADP(+) site; that span reads GASS…VARR. Ser-184 contributes to the substrate binding site. Tyr-197 (proton acceptor) is an active-site residue. Residues 197 to 201 and Lys-201 contribute to the NADP(+) site; that span reads YAASK.

It belongs to the short-chain dehydrogenases/reductases (SDR) family.

The protein localises to the membrane. The sequence is that of 11-beta-hydroxysteroid dehydrogenase-like 3 (HSD3) from Arabidopsis thaliana (Mouse-ear cress).